Reading from the N-terminus, the 397-residue chain is Galactokinase (397 aa).

A disordered region spans residues 1-27 (MGEAVGEPSASGSGSCTGRSRRGCGRR). A compositionally biased stretch (low complexity) spans 9-18 (SASGSGSCTG). 36–39 (EHTD) is a substrate binding site. ATP contacts are provided by residues S69 and 124–130 (GAGLSSS). Positions 130 and 161 each coordinate Mg(2+). D173 acts as the Proton acceptor in catalysis. Residue Y225 participates in substrate binding.

The protein belongs to the GHMP kinase family. GalK subfamily.

Its subcellular location is the cytoplasm. It catalyses the reaction alpha-D-galactose + ATP = alpha-D-galactose 1-phosphate + ADP + H(+). It functions in the pathway carbohydrate metabolism; galactose metabolism. Its function is as follows. Catalyzes the transfer of the gamma-phosphate of ATP to D-galactose to form alpha-D-galactose-1-phosphate (Gal-1-P). In Streptomyces lividans, this protein is Galactokinase.